The primary structure comprises 653 residues: Biotin biosynthesis bifunctional protein BioWF (653 aa).

Arginine 278 provides a ligand contact to substrate. 365-366 (GY) is a binding site for pyridoxal 5'-phosphate. Histidine 390 is a substrate binding site. Pyridoxal 5'-phosphate-binding positions include serine 436, 461–464 (DDAH), and 492–495 (TASK). An N6-(pyridoxal phosphate)lysine modification is found at lysine 495.

It in the N-terminal section; belongs to the BioW family. The protein in the C-terminal section; belongs to the class-II pyridoxal-phosphate-dependent aminotransferase family. BioF subfamily. As to quaternary structure, homodimer. Requires Mg(2+) as cofactor. The cofactor is pyridoxal 5'-phosphate.

The catalysed reaction is heptanedioate + ATP + CoA = 6-carboxyhexanoyl-CoA + AMP + diphosphate. It catalyses the reaction 6-carboxyhexanoyl-[ACP] + L-alanine + H(+) = (8S)-8-amino-7-oxononanoate + holo-[ACP] + CO2. Its pathway is metabolic intermediate metabolism; pimeloyl-CoA biosynthesis; pimeloyl-CoA from pimelate: step 1/1. The protein operates within cofactor biosynthesis; biotin biosynthesis. Its function is as follows. Catalyzes both the decarboxylative condensation of pimeloyl-[acyl-carrier protein] and L-alanine to produce 8-amino-7-oxononanoate (AON), [acyl-carrier protein], and carbon dioxide, and the transformation of pimelate into pimeloyl-CoA with concomitant hydrolysis of ATP to AMP. This Cutibacterium acnes (strain DSM 16379 / KPA171202) (Propionibacterium acnes) protein is Biotin biosynthesis bifunctional protein BioWF.